The following is a 1031-amino-acid chain: uncharacterized protein (1031 aa).

The SWIM-type zinc-finger motif lies at 50–85 (FKVQINLKTAAAHLDCSCSNDKQNCVHIIAALLKYN). The region spanning 590-751 (RALEDNQFGG…WSCFDFVLPN (162 aa)) is the Helicase ATP-binding domain. 603-610 (DEMGLGKT) provides a ligand contact to ATP. Residues 702-705 (DEAQ) carry the DEAQ box motif. The 155-residue stretch at 868–1022 (ALNIIYEALE…EDVNFFKSLS (155 aa)) folds into the Helicase C-terminal domain.

The protein belongs to the SNF2/RAD54 helicase family.

This is an uncharacterized protein from Mycoplasma genitalium (strain ATCC 33530 / DSM 19775 / NCTC 10195 / G37) (Mycoplasmoides genitalium).